Reading from the N-terminus, the 69-residue chain is MSQLTELVLLTVFLALFSRAEANPFVYNYEALRIGGLVFTCVLVAGAVTALCWGQCKPKRKHDDDASKI.

The first 22 residues, methionine 1–alanine 22, serve as a signal peptide directing secretion. The Extracellular portion of the chain corresponds to asparagine 23–arginine 33. Residues isoleucine 34–glycine 54 form a helical membrane-spanning segment. At glutamine 55–isoleucine 69 the chain is on the cytoplasmic side.

This sequence belongs to the FXYD family. As to expression, detected in adult gill and in larval skin at 2 days post-fertilization (at protein level). In adult gill, strong expression is found in the basal regions of the secondary lamellae.

The protein resides in the cell membrane. In terms of biological role, may modulate the activity of a sodium/potassium-transporting ATPase. The protein is FXYD domain-containing ion transport regulator 11 of Danio rerio (Zebrafish).